We begin with the raw amino-acid sequence, 115 residues long: U3-lycotoxin-Ls1h (115 aa).

A signal peptide spans M1–A20. A propeptide spanning residues E21–R44 is cleaved from the precursor. 4 disulfide bridges follow: C48-C63, C55-C72, C62-C87, and C74-C85.

This sequence belongs to the neurotoxin 19 (CSTX) family. 01 subfamily. Expressed by the venom gland.

The protein localises to the secreted. In Lycosa singoriensis (Wolf spider), this protein is U3-lycotoxin-Ls1h.